Here is a 208-residue protein sequence, read N- to C-terminus: 2,3-bisphosphoglycerate-dependent phosphoglycerate mutase (208 aa).

Residues 9–16 (RHGQSEWN), 22–23 (TG), Arg61, 88–91 (ERDY), Lys99, 115–116 (RR), and 159–160 (GN) contribute to the substrate site. The active-site Tele-phosphohistidine intermediate is the His10. The Proton donor/acceptor role is filled by Glu88.

Belongs to the phosphoglycerate mutase family. BPG-dependent PGAM subfamily. As to quaternary structure, homodimer.

It carries out the reaction (2R)-2-phosphoglycerate = (2R)-3-phosphoglycerate. It functions in the pathway carbohydrate degradation; glycolysis; pyruvate from D-glyceraldehyde 3-phosphate: step 3/5. In terms of biological role, catalyzes the interconversion of 2-phosphoglycerate and 3-phosphoglycerate. This Methylobacterium sp. (strain 4-46) protein is 2,3-bisphosphoglycerate-dependent phosphoglycerate mutase.